The sequence spans 935 residues: Ribonuclease E (935 aa).

Residues 39 to 119 (ANIYKGKITR…GNKGAALTTF (81 aa)) enclose the S1 motif domain. The Mg(2+) site is built by aspartate 302 and aspartate 345. 2 residues coordinate Zn(2+): cysteine 403 and cysteine 406. Positions 403–406 (CPRC) are required for zinc-mediated homotetramerization and catalytic activity. Disordered stretches follow at residues 571–669 (TKSE…DLRK) and 698–743 (VQNN…KSPM). Composition is skewed to basic and acidic residues over residues 593-625 (RSQDRRSSRRPRSENNETERTEEQVRNVRERNQ) and 701-719 (NDEKPVHQNQRSERQERQR). The segment covering 720 to 734 (RTPRHLRAANNQRRR) has biased composition (basic residues).

Belongs to the RNase E/G family. RNase E subfamily. In terms of assembly, component of the RNA degradosome, which is a multiprotein complex involved in RNA processing and mRNA degradation. Within the RNA degradosome, RNase E assembles into a homotetramer formed by a dimer of dimers. It depends on Zn(2+) as a cofactor. Mg(2+) is required as a cofactor.

The protein resides in the cytoplasm. It localises to the cell inner membrane. It catalyses the reaction Endonucleolytic cleavage of single-stranded RNA in A- and U-rich regions.. Its function is as follows. Endoribonuclease that plays a central role in RNA processing and decay. Required for the maturation of 5S and 16S rRNAs and the majority of tRNAs. Also involved in the degradation of most mRNAs. The protein is Ribonuclease E of Haemophilus influenzae (strain ATCC 51907 / DSM 11121 / KW20 / Rd).